A 370-amino-acid polypeptide reads, in one-letter code: Ubiquitin carboxyl-terminal hydrolase 12 (370 aa).

Residues 1–4 carry the Required for plasma membrane localization of USP12/WDR20 motif; that stretch reads MEIL. Residues 39–369 form the USP domain; sequence FGLVNFGNTC…SGYILFYQSR (331 aa). Cys-48 (nucleophile) is an active-site residue. Residues 146–157 show a composition bias toward basic and acidic residues; the sequence is QEKQNGRLRNGD. The interval 146 to 168 is disordered; the sequence is QEKQNGRLRNGDVDSEDNNSTPD. Cys-186, Cys-189, Cys-233, and Cys-236 together coordinate Zn(2+). Catalysis depends on His-317, which acts as the Proton acceptor.

It belongs to the peptidase C19 family. USP12/USP46 subfamily. As to quaternary structure, interacts with WDR48. Interacts with WDR20; this interaction promotes translocation of the USP12 complex to the plasma membrane. Component of the USP12-WDR20-WDR48 deubiquitinating complex. Component of the USP12-DMWD-WDR48 deubiquitinating complex. Interacts with PHLPP1. Interacts with RBPJ. Interacts with CBP; this interaction blocks the acetyltransferase activity of CREBBP. Interacts with ITCH; the interaction is more efficient when both USP12 and WDR48/UAF1 are involved and may mediate recruitment of the USP12 deubiquitinating complex to Notch.

Its subcellular location is the nucleus. The protein resides in the cytoplasm. It is found in the cell membrane. It carries out the reaction Thiol-dependent hydrolysis of ester, thioester, amide, peptide and isopeptide bonds formed by the C-terminal Gly of ubiquitin (a 76-residue protein attached to proteins as an intracellular targeting signal).. Its activity is regulated as follows. Activated by interaction with WDR20, WDR48 and DMWD through different allosteric mechanisms. Functionally, deubiquitinating enzyme that plays various roles in the regulation of the immune response and inflammation. During TCR engagement and activation, translocates into the cytoplasm and deubiquitinates its substrates LAT and TRAT1 and prevents their lysosome-dependent degradation to stabilize the TCR signaling complex at the plasma membrane. Plays an essential role in the selective LPS-induced macrophage response through the activation of NF-kappa-B pathway. In addition, promotes that antiviral immune response through targeting DNA sensor IFI16 to inhibit its proteasome-dependent degradation. Participates in the interferon signaling pathway and antiviral response independently of its deubiquitinase activity by maintaining nuclear phosphorylated STAT1 levels via inhibition of its CREBBP-mediated acetylation and subsequent dephosphorylation. Plays an intrinsic role in promoting the differentiation, activation and proliferation of CD4(+) T-cell by activating the NF-kappa-B signaling pathway through deubiquitinating and stabilizing B-cell lymphoma/leukemia 10/BCL10. In myeloid-derived suppressor cells promotes the activation of the NF-kappa-B via deubiquitination and stabilization of RELA. Regulates the 'Lys-63'-linked polyubiquitin chains of BAX and thereby modulates the mitochondrial apoptotic process. Negative regulator of NOTCH signaling that specifically deubiquitinates non-activated NOTCH receptors to target them for lysosomal degradation; deubiquitination of NOTCH stimulates its transport form late endosomes to lysosomes. Protects neurons against HTT/huntingtin-induced polyglutamine expansion-dependent neurodegeneration through regulation of autophagic flux. This function is independent of deubiquitinase activity or of other components of the USP12-WDR20-WDR48 deubiquitinating complex. In complex with WDR48, acts as a potential tumor suppressor by positively regulating PHLPP1 stability. The protein is Ubiquitin carboxyl-terminal hydrolase 12 of Rattus norvegicus (Rat).